Here is a 46-residue protein sequence, read N- to C-terminus: Homeobox protein Hox-D4 (46 aa).

Residues 1–46 (VNSNYTGGEPKRSRTAYTRQQVLELEKEFLFNRYLTRRRRIQHTLT) constitute a DNA-binding region (homeobox).

It belongs to the Antp homeobox family. Deformed subfamily. In terms of assembly, forms a DNA-binding heterodimer with transcription factor PBX1.

It localises to the nucleus. Its function is as follows. Sequence-specific transcription factor which is part of a developmental regulatory system that provides cells with specific positional identities on the anterior-posterior axis. In Ovis aries (Sheep), this protein is Homeobox protein Hox-D4 (HOXD4).